Here is a 60-residue protein sequence, read N- to C-terminus: Large ribosomal subunit protein bL32 (60 aa).

This sequence belongs to the bacterial ribosomal protein bL32 family.

The protein is Large ribosomal subunit protein bL32 of Azotobacter vinelandii (strain DJ / ATCC BAA-1303).